Reading from the N-terminus, the 425-residue chain is Bifunctional phosphoribosylaminoimidazole carboxylase/phosphoribosylaminoimidazole succinocarboxamide synthetase (425 aa).

An N-acetylalanine modification is found at A2. The SAICAR synthetase domain stretch occupies residues 2–260 (ATAEVLNIGR…WVADRVELLL (259 aa)). Y22 is modified (phosphotyrosine). Residue S27 is modified to Phosphoserine. K36 is subject to N6-acetyllysine. S107 carries the post-translational modification Phosphoserine. At T238 the chain carries Phosphothreonine. N6-acetyllysine is present on K247. Positions 261–266 (KSNSQC) are linker. An AIR carboxylase domain region spans residues 267–425 (RVVVLMGSTS…ADKKIRECNL (159 aa)). S274 is subject to Phosphoserine. Residue S332 participates in CO2 binding.

It in the N-terminal section; belongs to the SAICAR synthetase family. The protein in the C-terminal section; belongs to the AIR carboxylase family. Class II subfamily. Homooctamer.

The catalysed reaction is 5-amino-1-(5-phospho-D-ribosyl)imidazole-4-carboxylate + L-aspartate + ATP = (2S)-2-[5-amino-1-(5-phospho-beta-D-ribosyl)imidazole-4-carboxamido]succinate + ADP + phosphate + 2 H(+). It catalyses the reaction 5-amino-1-(5-phospho-D-ribosyl)imidazole-4-carboxylate + H(+) = 5-amino-1-(5-phospho-beta-D-ribosyl)imidazole + CO2. It functions in the pathway purine metabolism; IMP biosynthesis via de novo pathway; 5-amino-1-(5-phospho-D-ribosyl)imidazole-4-carboxamide from 5-amino-1-(5-phospho-D-ribosyl)imidazole-4-carboxylate: step 1/2. The protein operates within purine metabolism; IMP biosynthesis via de novo pathway; 5-amino-1-(5-phospho-D-ribosyl)imidazole-4-carboxylate from 5-amino-1-(5-phospho-D-ribosyl)imidazole (carboxylase route): step 1/1. Its function is as follows. Bifunctional phosphoribosylaminoimidazole carboxylase and phosphoribosylaminoimidazole succinocarboxamide synthetase catalyzing two reactions of the de novo purine biosynthetic pathway. The polypeptide is Bifunctional phosphoribosylaminoimidazole carboxylase/phosphoribosylaminoimidazole succinocarboxamide synthetase (Rattus norvegicus (Rat)).